The sequence spans 435 residues: Enolase (435 aa).

Glutamine 163 is a binding site for (2R)-2-phosphoglycerate. Glutamate 205 (proton donor) is an active-site residue. Mg(2+) is bound by residues aspartate 243, glutamate 292, and aspartate 319. Positions 344, 373, 374, and 395 each coordinate (2R)-2-phosphoglycerate. Residue lysine 344 is the Proton acceptor of the active site.

Belongs to the enolase family. It depends on Mg(2+) as a cofactor.

The protein resides in the cytoplasm. It localises to the secreted. It is found in the cell surface. It carries out the reaction (2R)-2-phosphoglycerate = phosphoenolpyruvate + H2O. The protein operates within carbohydrate degradation; glycolysis; pyruvate from D-glyceraldehyde 3-phosphate: step 4/5. Functionally, catalyzes the reversible conversion of 2-phosphoglycerate (2-PG) into phosphoenolpyruvate (PEP). It is essential for the degradation of carbohydrates via glycolysis. This is Enolase from Streptococcus suis (strain 98HAH33).